Here is a 496-residue protein sequence, read N- to C-terminus: N-succinylglutamate 5-semialdehyde dehydrogenase (496 aa).

229–234 (GSYATG) contacts NAD(+). Residues E252 and C286 contribute to the active site.

The protein belongs to the aldehyde dehydrogenase family. AstD subfamily.

It carries out the reaction N-succinyl-L-glutamate 5-semialdehyde + NAD(+) + H2O = N-succinyl-L-glutamate + NADH + 2 H(+). The protein operates within amino-acid degradation; L-arginine degradation via AST pathway; L-glutamate and succinate from L-arginine: step 4/5. Functionally, catalyzes the NAD-dependent reduction of succinylglutamate semialdehyde into succinylglutamate. This Legionella pneumophila subsp. pneumophila (strain Philadelphia 1 / ATCC 33152 / DSM 7513) protein is N-succinylglutamate 5-semialdehyde dehydrogenase.